The primary structure comprises 379 residues: Alcohol dehydrogenase 1 (379 aa).

Positions 47, 49, 69, 99, 102, 105, 113, and 177 each coordinate Zn(2+). An alcohol-binding residues include threonine 49 and histidine 69. Threonine 49 is an NAD(+) binding site. Residues 202-207 (GLGAVG), aspartate 226, arginine 231, threonine 272, valine 295, 295-297 (VGV), phenylalanine 322, and arginine 372 contribute to the NAD(+) site.

It belongs to the zinc-containing alcohol dehydrogenase family. As to quaternary structure, homodimer. Requires Zn(2+) as cofactor.

Its subcellular location is the cytoplasm. The enzyme catalyses a primary alcohol + NAD(+) = an aldehyde + NADH + H(+). It carries out the reaction a secondary alcohol + NAD(+) = a ketone + NADH + H(+). This chain is Alcohol dehydrogenase 1 (ADH1), found in Oryza sativa subsp. indica (Rice).